The sequence spans 461 residues: Photosystem II CP43 reaction center protein (461 aa).

The propeptide occupies 1–2; sequence ME. T3 carries the N-acetylthreonine modification. A Phosphothreonine modification is found at T3. The next 5 helical transmembrane spans lie at 57-81, 122-143, 166-188, 243-263, and 279-300; these read LFEVAHFIPEKPMYEQGLILLPHLA, IIGPEVLEESFPFFGYDWKDKN, KAMFFGGVYDTWAPGGGDVRVIS, KPFSWARRALVWSGEAYLSYS, and WFNNTAYPSEFFGPTGPEASQA. A [CaMn4O5] cluster-binding site is contributed by E355. The chain crosses the membrane as a helical span at residues 435–459; it reads RARAASGGFEKGLDRENEPVLSMKL.

Belongs to the PsbB/PsbC family. PsbC subfamily. PSII is composed of 1 copy each of membrane proteins PsbA, PsbB, PsbC, PsbD, PsbE, PsbF, PsbH, PsbI, PsbJ, PsbK, PsbL, PsbM, PsbT, PsbX, PsbY, PsbZ, Psb30/Ycf12, at least 3 peripheral proteins of the oxygen-evolving complex and a large number of cofactors. It forms dimeric complexes. The cofactor is Binds multiple chlorophylls and provides some of the ligands for the Ca-4Mn-5O cluster of the oxygen-evolving complex. It may also provide a ligand for a Cl- that is required for oxygen evolution. PSII binds additional chlorophylls, carotenoids and specific lipids..

It is found in the plastid. The protein resides in the cyanelle thylakoid membrane. Its function is as follows. One of the components of the core complex of photosystem II (PSII). It binds chlorophyll and helps catalyze the primary light-induced photochemical processes of PSII. PSII is a light-driven water:plastoquinone oxidoreductase, using light energy to abstract electrons from H(2)O, generating O(2) and a proton gradient subsequently used for ATP formation. The sequence is that of Photosystem II CP43 reaction center protein from Cyanophora paradoxa.